Reading from the N-terminus, the 149-residue chain is RALGPLIPSRLFDQFFGEGLLEYDLLPLFSSTISPYYRQSLFRSVLESGISEVRSDREKFTIMLDVKHFSPEDLSVKIIDDFVEIHGKHSERQDDHGYISREFHRRYRLPSNVDQSAITCSLSSDGMLTFSGPKVQANMDPSHSERPIP.

The sHSP domain maps to 41 to 149; sequence LFRSVLESGI…DPSHSERPIP (109 aa). Residues His89, Glu91, His96, and His143 each coordinate Zn(2+).

This sequence belongs to the small heat shock protein (HSP20) family. As to quaternary structure, heteropolymer composed of three CRYAA and one CRYAB subunits. Inter-subunit bridging via zinc ions enhances stability, which is crucial as there is no protein turn over in the lens. Can also form homodimers and homotetramers (dimers of dimers) which serve as the building blocks of homooligomers. Within homooligomers, the zinc-binding motif is created from residues of 3 different molecules. His-89 and Glu-91 from one molecule are ligands of the zinc ion, and His-96 and His-143 residues from additional molecules complete the site with tetrahedral coordination geometry.

Its subcellular location is the cytoplasm. It localises to the nucleus. In terms of biological role, contributes to the transparency and refractive index of the lens. May act as a chaperone, preventing aggregation of various proteins under a wide range of stress conditions. This is Alpha-crystallin A chain (CRYAA) from Eudromia elegans (Elegant crested-tinamou).